The following is a 571-amino-acid chain: Proline--tRNA ligase (571 aa).

The protein belongs to the class-II aminoacyl-tRNA synthetase family. ProS type 1 subfamily. In terms of assembly, homodimer.

It is found in the cytoplasm. It carries out the reaction tRNA(Pro) + L-proline + ATP = L-prolyl-tRNA(Pro) + AMP + diphosphate. In terms of biological role, catalyzes the attachment of proline to tRNA(Pro) in a two-step reaction: proline is first activated by ATP to form Pro-AMP and then transferred to the acceptor end of tRNA(Pro). As ProRS can inadvertently accommodate and process non-cognate amino acids such as alanine and cysteine, to avoid such errors it has two additional distinct editing activities against alanine. One activity is designated as 'pretransfer' editing and involves the tRNA(Pro)-independent hydrolysis of activated Ala-AMP. The other activity is designated 'posttransfer' editing and involves deacylation of mischarged Ala-tRNA(Pro). The misacylated Cys-tRNA(Pro) is not edited by ProRS. This Histophilus somni (strain 2336) (Haemophilus somnus) protein is Proline--tRNA ligase.